A 1255-amino-acid polypeptide reads, in one-letter code: DNA-directed RNA polymerase subunit beta' (1255 aa).

Residues cysteine 60, cysteine 62, cysteine 77, and cysteine 80 each coordinate Zn(2+). Mg(2+) contacts are provided by aspartate 503, aspartate 505, and aspartate 507. Zn(2+) contacts are provided by cysteine 875, cysteine 950, cysteine 957, and cysteine 960.

The protein belongs to the RNA polymerase beta' chain family. In terms of assembly, the RNAP catalytic core consists of 2 alpha, 1 beta, 1 beta' and 1 omega subunit. When a sigma factor is associated with the core the holoenzyme is formed, which can initiate transcription. Mg(2+) serves as cofactor. Zn(2+) is required as a cofactor.

The catalysed reaction is RNA(n) + a ribonucleoside 5'-triphosphate = RNA(n+1) + diphosphate. Functionally, DNA-dependent RNA polymerase catalyzes the transcription of DNA into RNA using the four ribonucleoside triphosphates as substrates. The polypeptide is DNA-directed RNA polymerase subunit beta' (Mycoplasma capricolum subsp. capricolum (strain California kid / ATCC 27343 / NCTC 10154)).